The following is a 165-amino-acid chain: Regulator of ribonuclease activity A (165 aa).

Belongs to the RraA family. As to quaternary structure, homotrimer. Binds to both RNA-binding sites in the C-terminal region of Rne and to RhlB.

The protein localises to the cytoplasm. In terms of biological role, globally modulates RNA abundance by binding to RNase E (Rne) and regulating its endonucleolytic activity. Can modulate Rne action in a substrate-dependent manner by altering the composition of the degradosome. Modulates RNA-binding and helicase activities of the degradosome. The polypeptide is Regulator of ribonuclease activity A (Pseudoalteromonas translucida (strain TAC 125)).